Consider the following 129-residue polypeptide: Large-conductance mechanosensitive channel (129 aa).

The next 2 helical transmembrane spans lie at 10–30 (FAVK…GAFG) and 70–90 (AVML…VIAI).

The protein belongs to the MscL family. In terms of assembly, homopentamer.

Its subcellular location is the cell inner membrane. Functionally, channel that opens in response to stretch forces in the membrane lipid bilayer. May participate in the regulation of osmotic pressure changes within the cell. The polypeptide is Large-conductance mechanosensitive channel (Actinobacillus pleuropneumoniae serotype 3 (strain JL03)).